The primary structure comprises 422 residues: S-adenosylmethionine synthase (422 aa).

H16 provides a ligand contact to ATP. Position 18 (D18) interacts with Mg(2+). E44 is a K(+) binding site. L-methionine-binding residues include E57 and Q100. The flexible loop stretch occupies residues 100-110 (QSPDISQGVSA). Residues 175–177 (DGK), 251–252 (KF), D260, 266–267 (RK), A283, and K287 each bind ATP. D260 contributes to the L-methionine binding site. K291 provides a ligand contact to L-methionine.

Belongs to the AdoMet synthase family. In terms of assembly, homotetramer; dimer of dimers. The cofactor is Mg(2+). K(+) serves as cofactor.

It is found in the cytoplasm. It carries out the reaction L-methionine + ATP + H2O = S-adenosyl-L-methionine + phosphate + diphosphate. The protein operates within amino-acid biosynthesis; S-adenosyl-L-methionine biosynthesis; S-adenosyl-L-methionine from L-methionine: step 1/1. In terms of biological role, catalyzes the formation of S-adenosylmethionine (AdoMet) from methionine and ATP. The overall synthetic reaction is composed of two sequential steps, AdoMet formation and the subsequent tripolyphosphate hydrolysis which occurs prior to release of AdoMet from the enzyme. The sequence is that of S-adenosylmethionine synthase from Rippkaea orientalis (strain PCC 8801 / RF-1) (Cyanothece sp. (strain PCC 8801)).